We begin with the raw amino-acid sequence, 357 residues long: MVAMSGGVDSSTAAALLKEAGYEVIGVTLALWPEDTPPPPGETGCCSLKAVDDARRVANILDIPYYVLNFRDLFEREVIDYFIASYLEGETPNPCIACNRRIKFGALLAKARALGIDYIATGHYARRWYDKEKGRYLLARGRDAGKDQSYALYTFTQEQLAHTLLPLGDYTKVEVREIAARYGLPVARKAESQEICFVTEGDYRDYIQSRAREKIKPGPILDTRGRVLGQHRGLPFYTIGQRKGLGLALGKPCFVVALDPERNAVIVGDKEDLERRVLYARDNNYILWGELPGKARVTARIRYRAPEAAATWHPLAGGRARLEFDEPQRAITPGQAVVYYQGDLVVGGGTIESVAQI.

ATP contacts are provided by residues 3-10 (AMSGGVDS) and leucine 29. The active-site Nucleophile is cysteine 98. Cysteine 98 and cysteine 196 form a disulfide bridge. Glycine 122 serves as a coordination point for ATP. The interval 146–148 (KDQ) is interaction with tRNA. The active-site Cysteine persulfide intermediate is the cysteine 196. Residues 302 to 303 (RY) form an interaction with tRNA region.

The protein belongs to the MnmA/TRMU family.

It localises to the cytoplasm. It catalyses the reaction S-sulfanyl-L-cysteinyl-[protein] + uridine(34) in tRNA + AH2 + ATP = 2-thiouridine(34) in tRNA + L-cysteinyl-[protein] + A + AMP + diphosphate + H(+). Functionally, catalyzes the 2-thiolation of uridine at the wobble position (U34) of tRNA, leading to the formation of s(2)U34. In Moorella thermoacetica (strain ATCC 39073 / JCM 9320), this protein is tRNA-specific 2-thiouridylase MnmA.